We begin with the raw amino-acid sequence, 83 residues long: MAENALADVKTLSFERAIEELESIVKRLEDGKVPLEESVAIYERGEALKRRCEELLRQAEARVEKITTDASGQVTGTEPLDVQ.

This sequence belongs to the XseB family. As to quaternary structure, heterooligomer composed of large and small subunits.

The protein localises to the cytoplasm. The enzyme catalyses Exonucleolytic cleavage in either 5'- to 3'- or 3'- to 5'-direction to yield nucleoside 5'-phosphates.. In terms of biological role, bidirectionally degrades single-stranded DNA into large acid-insoluble oligonucleotides, which are then degraded further into small acid-soluble oligonucleotides. This Nitrobacter hamburgensis (strain DSM 10229 / NCIMB 13809 / X14) protein is Exodeoxyribonuclease 7 small subunit.